The sequence spans 188 residues: Probable chemoreceptor glutamine deamidase CheD (188 aa).

This sequence belongs to the CheD family.

The catalysed reaction is L-glutaminyl-[protein] + H2O = L-glutamyl-[protein] + NH4(+). Its function is as follows. Probably deamidates glutamine residues to glutamate on methyl-accepting chemotaxis receptors (MCPs), playing an important role in chemotaxis. The protein is Probable chemoreceptor glutamine deamidase CheD of Caulobacter sp. (strain K31).